Here is a 405-residue protein sequence, read N- to C-terminus: PVYISIGCNLPAIPHPTFSRDPVPFSLAPKLSNQMGLEAAVEAAAEFLNKAVKPVLVGGPKLRVAKASDAFVELADASGYALAVMPSAKGMVPEHHPHFIGTYWGAVSTAFCAEIVESADAYLFAGPIFNDYSSVGYSLLLKKEKAIIVMPDRVVIANGPAFGCVLMNDFLKALAKRLKHNNVAYENYHRIFVPDGTPLKSASKEPLRVNVMFQHIQKMLSSETAVIAETGDSWFNCQKLKLPEGCGYEFQMQYGSIGWSVGATLGYAQAVPEKRVIACIGDGSFQVTAQDVSTMLRCGQKTIIFLINNGGYTIEVEIHDGPYNVIKNWNYTGLVDAIHNGEGKCWTTKVFCEEELVEAIAKATGPKKDSLCFIEVIVHKDDTSKELLEWGSRVSAANSRPPNPQ.

Residues 232-314 are thiamine pyrophosphate binding; the sequence is DSWFNCQKLK…FLINNGGYTI (83 aa). Positions 282, 309, and 311 each coordinate Mg(2+). Glu315 lines the substrate pocket.

This sequence belongs to the TPP enzyme family. In terms of assembly, homotetramer. It depends on a metal cation as a cofactor. Thiamine diphosphate serves as cofactor.

It catalyses the reaction a 2-oxocarboxylate + H(+) = an aldehyde + CO2. In Pisum sativum (Garden pea), this protein is Pyruvate decarboxylase 2 (PDC2).